The chain runs to 351 residues: dTDP-glucose 4,6-dehydratase (351 aa).

NAD(+) contacts are provided by residues Phe12 to Ile13, Asp32 to Thr35, Asp58 to Ile59, Phe80 to Ser84, and Thr99. Ser84 is a binding site for substrate. Thr133 serves as a coordination point for substrate. Asp134 (proton donor) is an active-site residue. Catalysis depends on proton acceptor residues Glu135 and Tyr158. Tyr158–Lys162 is a binding site for NAD(+). Asn187 contacts substrate. Asn188 lines the NAD(+) pocket. Substrate-binding positions include Lys197–Leu198, Pro213–Tyr215, Arg222, Asn257, and Asp289–His293.

It belongs to the NAD(P)-dependent epimerase/dehydratase family. dTDP-glucose dehydratase subfamily. As to quaternary structure, homodimer. The cofactor is NAD(+).

The catalysed reaction is dTDP-alpha-D-glucose = dTDP-4-dehydro-6-deoxy-alpha-D-glucose + H2O. The protein operates within carbohydrate biosynthesis; dTDP-L-rhamnose biosynthesis. Its pathway is bacterial outer membrane biogenesis; LPS O-antigen biosynthesis. Functionally, catalyzes the dehydration of dTDP-D-glucose to form dTDP-6-deoxy-D-xylo-4-hexulose via a three-step process involving oxidation, dehydration and reduction. In Xanthomonas campestris pv. campestris (strain B100), this protein is dTDP-glucose 4,6-dehydratase (rfbB).